The primary structure comprises 315 residues: Putative ankyrin repeat protein R600 (315 aa).

5 ANK repeats span residues 79–108, 118–152, 153–182, 184–211, and 212–240; these read NECRYFRMAVYNNSYDIAKYLLENGANVHV, SGFGKFYVFHSEKKEKRDTVELVKLLIDYNAMVGT, DTCNLVHTAIDANRLDVVKILVENGADIFS, QSKLLKSAVMYNYDILEYLISQGIDVTD, and DNNSVLKFAVSRGYDCVDLLLDAGADMNT.

The protein is Putative ankyrin repeat protein R600 of Acanthamoeba polyphaga mimivirus (APMV).